The sequence spans 563 residues: Urocanate hydratase (563 aa).

Residues G53–G54, Q131, G177–G179, E197, R202, N243–A244, Q264–H268, Y274–L275, and Y323 contribute to the NAD(+) site. The active site involves C411. G493 provides a ligand contact to NAD(+).

It belongs to the urocanase family. Requires NAD(+) as cofactor.

The protein resides in the cytoplasm. The enzyme catalyses 4-imidazolone-5-propanoate = trans-urocanate + H2O. It participates in amino-acid degradation; L-histidine degradation into L-glutamate; N-formimidoyl-L-glutamate from L-histidine: step 2/3. Catalyzes the conversion of urocanate to 4-imidazolone-5-propionate. This is Urocanate hydratase from Yersinia enterocolitica serotype O:8 / biotype 1B (strain NCTC 13174 / 8081).